Consider the following 166-residue polypeptide: Small ribosomal subunit protein uS4 (166 aa).

One can recognise an S4 RNA-binding domain in the interval 102–164 (RRLQTIVWRK…HPSCLEVEKE (63 aa)).

Belongs to the universal ribosomal protein uS4 family. As to quaternary structure, part of the 30S ribosomal subunit. Contacts protein S5. The interaction surface between S4 and S5 is involved in control of translational fidelity.

Functionally, one of the primary rRNA binding proteins, it binds directly to 16S rRNA where it nucleates assembly of the body of the 30S subunit. In terms of biological role, with S5 and S12 plays an important role in translational accuracy. The sequence is that of Small ribosomal subunit protein uS4 from Korarchaeum cryptofilum (strain OPF8).